We begin with the raw amino-acid sequence, 425 residues long: Glucose-1-phosphate adenylyltransferase (425 aa).

Residues Y114, G179, 194 to 195 (EK), and S212 contribute to the alpha-D-glucose 1-phosphate site.

Belongs to the bacterial/plant glucose-1-phosphate adenylyltransferase family. Homotetramer.

It catalyses the reaction alpha-D-glucose 1-phosphate + ATP + H(+) = ADP-alpha-D-glucose + diphosphate. The protein operates within glycan biosynthesis; glycogen biosynthesis. Functionally, involved in the biosynthesis of ADP-glucose, a building block required for the elongation reactions to produce glycogen. Catalyzes the reaction between ATP and alpha-D-glucose 1-phosphate (G1P) to produce pyrophosphate and ADP-Glc. This Pectobacterium carotovorum subsp. carotovorum (strain PC1) protein is Glucose-1-phosphate adenylyltransferase.